Consider the following 463-residue polypeptide: Argininosuccinate lyase (463 aa).

Belongs to the lyase 1 family. Argininosuccinate lyase subfamily.

It localises to the cytoplasm. The catalysed reaction is 2-(N(omega)-L-arginino)succinate = fumarate + L-arginine. Its pathway is amino-acid biosynthesis; L-arginine biosynthesis; L-arginine from L-ornithine and carbamoyl phosphate: step 3/3. The protein is Argininosuccinate lyase of Prochlorococcus marinus (strain NATL2A).